An 895-amino-acid polypeptide reads, in one-letter code: Microsomal triglyceride transfer protein large subunit (895 aa).

Residues 1–18 form the signal peptide; the sequence is MILLAVLFLCFFSSYSAS. In terms of domain architecture, Vitellogenin spans 28-659; the sequence is LNNERLYKLT…VFQYLGKAGL (632 aa). A disulfide bond links cysteine 174 and cysteine 194.

In terms of assembly, heterodimer; heterodimerizes with the protein disulfide isomerase (P4HB/PDI). Interacts with APOB. Interacts with PRAP1.

The protein resides in the endoplasmic reticulum. Its subcellular location is the golgi apparatus. It catalyses the reaction a 1,2-diacyl-sn-glycero-3-phosphocholine(in) = a 1,2-diacyl-sn-glycero-3-phosphocholine(out). The catalysed reaction is a 1,2-diacyl-sn-glycero-3-phosphoethanolamine(in) = a 1,2-diacyl-sn-glycero-3-phosphoethanolamine(out). It carries out the reaction a cholesterol ester(in) = a cholesterol ester(out). The enzyme catalyses a triacyl-sn-glycerol(in) = a triacyl-sn-glycerol(out). Its function is as follows. Catalyzes the transport of triglyceride, cholesteryl ester, and phospholipid between phospholipid surfaces. Required for the assembly and secretion of plasma lipoproteins that contain apolipoprotein B. May be involved in regulating cholesteryl ester biosynthesis in cells that produce lipoproteins. In Mesocricetus auratus (Golden hamster), this protein is Microsomal triglyceride transfer protein large subunit (MTTP).